Reading from the N-terminus, the 180-residue chain is NAD(P)H-quinone oxidoreductase subunit I, chloroplastic (180 aa).

4Fe-4S ferredoxin-type domains lie at 55 to 84 (GRIH…VDWR) and 95 to 124 (LNYS…MTEE). [4Fe-4S] cluster is bound by residues cysteine 64, cysteine 67, cysteine 70, cysteine 74, cysteine 104, cysteine 107, cysteine 110, and cysteine 114.

Belongs to the complex I 23 kDa subunit family. NDH is composed of at least 16 different subunits, 5 of which are encoded in the nucleus. It depends on [4Fe-4S] cluster as a cofactor.

Its subcellular location is the plastid. The protein localises to the chloroplast thylakoid membrane. It carries out the reaction a plastoquinone + NADH + (n+1) H(+)(in) = a plastoquinol + NAD(+) + n H(+)(out). The enzyme catalyses a plastoquinone + NADPH + (n+1) H(+)(in) = a plastoquinol + NADP(+) + n H(+)(out). In terms of biological role, NDH shuttles electrons from NAD(P)H:plastoquinone, via FMN and iron-sulfur (Fe-S) centers, to quinones in the photosynthetic chain and possibly in a chloroplast respiratory chain. The immediate electron acceptor for the enzyme in this species is believed to be plastoquinone. Couples the redox reaction to proton translocation, and thus conserves the redox energy in a proton gradient. This is NAD(P)H-quinone oxidoreductase subunit I, chloroplastic from Drimys granadensis.